Reading from the N-terminus, the 277-residue chain is tRNA pseudouridine synthase A (277 aa).

Asp51 acts as the Nucleophile in catalysis. Position 109 (Tyr109) interacts with substrate.

It belongs to the tRNA pseudouridine synthase TruA family. In terms of assembly, homodimer.

The catalysed reaction is uridine(38/39/40) in tRNA = pseudouridine(38/39/40) in tRNA. In terms of biological role, formation of pseudouridine at positions 38, 39 and 40 in the anticodon stem and loop of transfer RNAs. This is tRNA pseudouridine synthase A from Nitrosomonas eutropha (strain DSM 101675 / C91 / Nm57).